A 162-amino-acid polypeptide reads, in one-letter code: Deoxyuridine 5'-triphosphate nucleotidohydrolase (162 aa).

This sequence belongs to the dUTPase family. As to quaternary structure, homotrimer. The cofactor is Mg(2+).

It localises to the host cytoplasm. Its subcellular location is the virion. The enzyme catalyses dUTP + H2O = dUMP + diphosphate + H(+). In terms of biological role, the viral dUTPase may play a role in lowering the dUTP concentration in natural infections to minimize misincorporation of deoxyuridine into the viral DNA and ensure the fidelity of genome replication. This chain is Deoxyuridine 5'-triphosphate nucleotidohydrolase, found in Ornithodoros (relapsing fever ticks).